The sequence spans 264 residues: Thymidylate synthase (264 aa).

A dUMP-binding site is contributed by Arg21. His51 serves as a coordination point for (6R)-5,10-methylene-5,6,7,8-tetrahydrofolate. Residue 126 to 127 (RR) coordinates dUMP. The active-site Nucleophile is the Cys146. DUMP contacts are provided by residues 166-169 (RSCD), Asn177, and 207-209 (HLY). Asp169 serves as a coordination point for (6R)-5,10-methylene-5,6,7,8-tetrahydrofolate. Ala263 is a binding site for (6R)-5,10-methylene-5,6,7,8-tetrahydrofolate.

The protein belongs to the thymidylate synthase family. Bacterial-type ThyA subfamily. As to quaternary structure, homodimer.

It is found in the cytoplasm. The enzyme catalyses dUMP + (6R)-5,10-methylene-5,6,7,8-tetrahydrofolate = 7,8-dihydrofolate + dTMP. The protein operates within pyrimidine metabolism; dTTP biosynthesis. Catalyzes the reductive methylation of 2'-deoxyuridine-5'-monophosphate (dUMP) to 2'-deoxythymidine-5'-monophosphate (dTMP) while utilizing 5,10-methylenetetrahydrofolate (mTHF) as the methyl donor and reductant in the reaction, yielding dihydrofolate (DHF) as a by-product. This enzymatic reaction provides an intracellular de novo source of dTMP, an essential precursor for DNA biosynthesis. This Aeromonas hydrophila subsp. hydrophila (strain ATCC 7966 / DSM 30187 / BCRC 13018 / CCUG 14551 / JCM 1027 / KCTC 2358 / NCIMB 9240 / NCTC 8049) protein is Thymidylate synthase.